The chain runs to 198 residues: Ribonuclease HII 1 (198 aa).

Positions E7–A196 constitute an RNase H type-2 domain. D13, E14, and D105 together coordinate a divalent metal cation.

This sequence belongs to the RNase HII family. It depends on Mn(2+) as a cofactor. Mg(2+) serves as cofactor.

The protein localises to the cytoplasm. It catalyses the reaction Endonucleolytic cleavage to 5'-phosphomonoester.. In terms of biological role, endonuclease that specifically degrades the RNA of RNA-DNA hybrids. The protein is Ribonuclease HII 1 of Methylibium petroleiphilum (strain ATCC BAA-1232 / LMG 22953 / PM1).